We begin with the raw amino-acid sequence, 292 residues long: Glycine-rich RNA-binding protein RZ1B (292 aa).

The RRM domain maps to 12–90 (SRIFVGGLSW…KVISVNKAEP (79 aa)). Ser-20 is modified (phosphoserine). The segment at 93–114 (GGEDVDQLKKGGGYSSRGKGTE) is disordered. A CCHC-type zinc finger spans residues 117-132 (CFKCRRPGHWARDCPS). Composition is skewed to basic and acidic residues over residues 180 to 210 (DGRRDRDGGRYSYRDRFDSGDKYEPRDHYPF) and 220 to 268 (FVSD…EGRP). The interval 180–292 (DGRRDRDGGR…GGRPSSYERW (113 aa)) is disordered.

As to expression, expressed in roots, rosette and cauline leaves, stems, floral buds and flowers.

Its subcellular location is the nucleus. Binds RNA and DNA sequences non-specifically. May be involved in tolerance to cold stress. This is Glycine-rich RNA-binding protein RZ1B from Arabidopsis thaliana (Mouse-ear cress).